We begin with the raw amino-acid sequence, 254 residues long: Sugar fermentation stimulation protein homolog (254 aa).

This sequence belongs to the SfsA family.

The protein is Sugar fermentation stimulation protein homolog of Synechococcus sp. (strain CC9605).